Consider the following 177-residue polypeptide: Small ribosomal subunit protein mS23 (177 aa).

Residue Ala2 is modified to N-acetylalanine. Lys83 is subject to N6-succinyllysine. The residue at position 102 (Lys102) is an N6-acetyllysine. The disordered stretch occupies residues 145–177 (LQASSEGHEPQEDDDLAQRGQVKQEPETAPSPP).

Belongs to the mitochondrion-specific ribosomal protein mS23 family. As to quaternary structure, component of the mitochondrial ribosome small subunit (28S) which comprises a 12S rRNA and about 30 distinct proteins.

It is found in the mitochondrion. This Mus musculus (Mouse) protein is Small ribosomal subunit protein mS23.